The following is a 125-amino-acid chain: MPTINQLVRQGRTVEKINSKSPAMQNSPQRRGVCTRVYTTTPKKPNSALRKVAKVRLTNGFEVISYIGGEGHNLQEHSVVLVRGGRVKDLPGVRYHIVRGSLDLQGVKDRKQSRSKYGAKRPKKA.

A 3-methylthioaspartic acid modification is found at Asp89. The tract at residues Gly106–Ala125 is disordered. Basic residues predominate over residues Ser113 to Ala125.

It belongs to the universal ribosomal protein uS12 family. Part of the 30S ribosomal subunit. Contacts proteins S8 and S17. May interact with IF1 in the 30S initiation complex.

Functionally, with S4 and S5 plays an important role in translational accuracy. Its function is as follows. Interacts with and stabilizes bases of the 16S rRNA that are involved in tRNA selection in the A site and with the mRNA backbone. Located at the interface of the 30S and 50S subunits, it traverses the body of the 30S subunit contacting proteins on the other side and probably holding the rRNA structure together. The combined cluster of proteins S8, S12 and S17 appears to hold together the shoulder and platform of the 30S subunit. The sequence is that of Small ribosomal subunit protein uS12 from Variovorax paradoxus (strain S110).